Reading from the N-terminus, the 160-residue chain is MIHESIEEFLAALPRSGALIGLDLGTKTIGVAVTDGLRRIATPLLTIRRTKFTEDAARLRAITAERGLVGIVLGLPRNMDGSEGPRAQSTRAFARNLSQVLPLPIGYWDERLSTVAAERALIEADTSRKRRAEVIDHVAAGYILQGVLDRLDWLGRERNA.

The protein belongs to the YqgF nuclease family.

The protein resides in the cytoplasm. Its function is as follows. Could be a nuclease involved in processing of the 5'-end of pre-16S rRNA. The protein is Putative pre-16S rRNA nuclease of Cereibacter sphaeroides (strain ATCC 17025 / ATH 2.4.3) (Rhodobacter sphaeroides).